The following is a 197-amino-acid chain: Holliday junction branch migration complex subunit RuvA (197 aa).

The interval 1–64 (MIDSIVGIIQ…LSELECYGFL (64 aa)) is domain I. Residues 65–143 (TREERELFLK…KEFKVASTSG (79 aa)) are domain II. The flexible linker stretch occupies residues 144 to 152 (KEEKTYEKL). Residues 152-197 (LEEISLALLSLGYDIDEVNQVLSSEDFSELSLEDGIKLALKKLSKI) are domain III.

It belongs to the RuvA family. As to quaternary structure, homotetramer. Forms an RuvA(8)-RuvB(12)-Holliday junction (HJ) complex. HJ DNA is sandwiched between 2 RuvA tetramers; dsDNA enters through RuvA and exits via RuvB. An RuvB hexamer assembles on each DNA strand where it exits the tetramer. Each RuvB hexamer is contacted by two RuvA subunits (via domain III) on 2 adjacent RuvB subunits; this complex drives branch migration. In the full resolvosome a probable DNA-RuvA(4)-RuvB(12)-RuvC(2) complex forms which resolves the HJ.

It is found in the cytoplasm. In terms of biological role, the RuvA-RuvB-RuvC complex processes Holliday junction (HJ) DNA during genetic recombination and DNA repair, while the RuvA-RuvB complex plays an important role in the rescue of blocked DNA replication forks via replication fork reversal (RFR). RuvA specifically binds to HJ cruciform DNA, conferring on it an open structure. The RuvB hexamer acts as an ATP-dependent pump, pulling dsDNA into and through the RuvAB complex. HJ branch migration allows RuvC to scan DNA until it finds its consensus sequence, where it cleaves and resolves the cruciform DNA. This Caldicellulosiruptor bescii (strain ATCC BAA-1888 / DSM 6725 / KCTC 15123 / Z-1320) (Anaerocellum thermophilum) protein is Holliday junction branch migration complex subunit RuvA.